The following is a 391-amino-acid chain: Protein-glutamate methylesterase/protein-glutamine glutaminase (391 aa).

Residues 4–121 (KVLVVDDSSF…ARNNEDAIKL (118 aa)) enclose the Response regulatory domain. Asp55 is subject to 4-aspartylphosphate. Residues 197 to 391 (SGKHYQLVAI…IRLKTEVGCG (195 aa)) enclose the CheB-type methylesterase domain. Active-site residues include Ser209, His236, and Asp333.

The protein belongs to the CheB family. In terms of processing, phosphorylated by CheA. Phosphorylation of the N-terminal regulatory domain activates the methylesterase activity.

It localises to the cytoplasm. It catalyses the reaction [protein]-L-glutamate 5-O-methyl ester + H2O = L-glutamyl-[protein] + methanol + H(+). The catalysed reaction is L-glutaminyl-[protein] + H2O = L-glutamyl-[protein] + NH4(+). Its function is as follows. Involved in chemotaxis. Part of a chemotaxis signal transduction system that modulates chemotaxis in response to various stimuli. Catalyzes the demethylation of specific methylglutamate residues introduced into the chemoreceptors (methyl-accepting chemotaxis proteins or MCP) by CheR. Also mediates the irreversible deamidation of specific glutamine residues to glutamic acid. The chain is Protein-glutamate methylesterase/protein-glutamine glutaminase from Pseudoalteromonas translucida (strain TAC 125).